The primary structure comprises 392 residues: Protein DJ-1 homolog A (392 aa).

2 consecutive PfpI endopeptidase domains span residues Lys6–Phe174 and Pro212–Tyr378.

The protein belongs to the peptidase C56 family. As to quaternary structure, homodimer. Interacts with CSD1 and GPX2.

The protein localises to the cytoplasm. It is found in the cytosol. It localises to the nucleus. Its function is as follows. Involved in oxidative stress response. Confers protection against diverse stresses by binding both CSD1 and GPX2 and mediating the cytosolic activation of the Cu-Zn-dependent superoxide dismutase activity of CSD1. This Arabidopsis thaliana (Mouse-ear cress) protein is Protein DJ-1 homolog A (DJ1A).